The sequence spans 169 residues: Sorting nexin-24 (169 aa).

N-acetylmethionine is present on Met1. The region spanning 1-125 is the PX domain; sequence MEVYIPSFRY…SFDETESEES (125 aa). A 1,2-diacyl-sn-glycero-3-phospho-(1D-myo-inositol-3-phosphate) contacts are provided by Arg38, Ser40, Lys61, and Arg74. 2 positions are modified to phosphoserine: Ser113 and Ser116.

The protein belongs to the sorting nexin family.

Its subcellular location is the cytoplasmic vesicle membrane. May be involved in several stages of intracellular trafficking. The sequence is that of Sorting nexin-24 (SNX24) from Homo sapiens (Human).